The sequence spans 203 residues: Octanoyltransferase (203 aa).

One can recognise a BPL/LPL catalytic domain in the interval 32-203 (ISTPDEIWLV…LMHKIREIFS (172 aa)). Substrate is bound by residues 71–78 (RGGKITYH), 138–140 (SLG), and 151–153 (GMA). Cys169 serves as the catalytic Acyl-thioester intermediate.

This sequence belongs to the LipB family.

Its subcellular location is the cytoplasm. It catalyses the reaction octanoyl-[ACP] + L-lysyl-[protein] = N(6)-octanoyl-L-lysyl-[protein] + holo-[ACP] + H(+). It participates in protein modification; protein lipoylation via endogenous pathway; protein N(6)-(lipoyl)lysine from octanoyl-[acyl-carrier-protein]: step 1/2. In terms of biological role, catalyzes the transfer of endogenously produced octanoic acid from octanoyl-acyl-carrier-protein onto the lipoyl domains of lipoate-dependent enzymes. Lipoyl-ACP can also act as a substrate although octanoyl-ACP is likely to be the physiological substrate. The sequence is that of Octanoyltransferase from Buchnera aphidicola subsp. Baizongia pistaciae (strain Bp).